The primary structure comprises 130 residues: Small ribosomal subunit protein uS11c (130 aa).

Belongs to the universal ribosomal protein uS11 family. Part of the 30S ribosomal subunit.

The protein resides in the plastid. Its subcellular location is the chloroplast. The protein is Small ribosomal subunit protein uS11c of Adiantum capillus-veneris (Maidenhair fern).